A 351-amino-acid chain; its full sequence is Alanine racemase (351 aa).

Catalysis depends on K35, which acts as the Proton acceptor; specific for D-alanine. Position 35 is an N6-(pyridoxal phosphate)lysine (K35). R127 contributes to the substrate binding site. Y247 functions as the Proton acceptor; specific for L-alanine in the catalytic mechanism. Residue M295 coordinates substrate.

It belongs to the alanine racemase family. The cofactor is pyridoxal 5'-phosphate.

The catalysed reaction is L-alanine = D-alanine. The protein operates within amino-acid biosynthesis; D-alanine biosynthesis; D-alanine from L-alanine: step 1/1. In terms of biological role, catalyzes the interconversion of L-alanine and D-alanine. May also act on other amino acids. This is Alanine racemase (alr) from Vesicomyosocius okutanii subsp. Calyptogena okutanii (strain HA).